Consider the following 171-residue polypeptide: MPLLDSFTVDHTRMAAPAVRIAKNMTTPHGDQITVFDLRFCRPNNAILPERGIHTLEHLFAGFMRDHLNGDGVEIIDISPMGCRTGFYMSLIGTPDEARVAAAWKAAMEDVLRVSDQRSIPELNEFQCGTYSMHSLEEAHQIARQILASGIGINHNDTLALSAEQLTHLHP.

Fe cation is bound by residues His-54, His-58, and Cys-128.

This sequence belongs to the LuxS family. As to quaternary structure, homodimer. The cofactor is Fe cation.

The enzyme catalyses S-(5-deoxy-D-ribos-5-yl)-L-homocysteine = (S)-4,5-dihydroxypentane-2,3-dione + L-homocysteine. Functionally, involved in the synthesis of autoinducer 2 (AI-2) which is secreted by bacteria and is used to communicate both the cell density and the metabolic potential of the environment. The regulation of gene expression in response to changes in cell density is called quorum sensing. Catalyzes the transformation of S-ribosylhomocysteine (RHC) to homocysteine (HC) and 4,5-dihydroxy-2,3-pentadione (DPD). This chain is S-ribosylhomocysteine lyase, found in Edwardsiella ictaluri (strain 93-146).